The following is a 250-amino-acid chain: Functional amyloid subunit FapC (250 aa).

Positions 1-24 (MKPTMALKPLVFALAALMAVAAQA) are cleaved as a signal peptide. Residues 62–95 (NNAGANGSLSNSKGNLGANIAAGSGNQQDNAAAI) form a FapC_R1 repeat. Residues 96-126 (TSSAGDAATVFAVADIYQESKDNKFTNKGTQ) form a linker 1 region. One copy of the FapC_R2 repeat lies at 127–160 (NNALLNNSANNSSGNVGVNVAAGQGNQQKNNLAI). Residues 161-199 (VTADGKNVAAASNTEQVSLDNHFLNEASSKHSYKPQYVV) form a linker 2 region. One copy of the FapC_R3 repeat lies at 200–233 (NNAGLLNSANNASGNIGVNVAAGAGNQQSNTLTL). Positions 237–240 (CTVC) match the Cys-X-X-Cys motif.

This sequence belongs to the FapB/FapC family. The major component of purified amyloid fibrils. Forms fibrils in vitro; in the presence of FapA the fibrils are about 50% wider. Interacts with FapA. Fibrillates in vitro; this is inhibited by FapA. Fibrils are resistant to boiling in 2% (weight/vol) SDS and require &gt;90% (vol/vol) formic acid to dissolve.

The protein resides in the fimbrium. Its subcellular location is the secreted. Functionally, the major functional amyloid subunit in this bacterium. Intrinsically disordered in its monomeric state. Upon overexpression of the endogenous six-gene locus (fapA-fapF) in situ, cells form large clumps during liquid growth, make large amounts of biofilm and produce amyloid fibrils. Expression of the 6 gene operon in E.coli strain BL21(DE3) induces flocculation and biofilm formation with copious extracellular fibrils. The chain is Functional amyloid subunit FapC from Pseudomonas fluorescens.